A 400-amino-acid chain; its full sequence is S-adenosylmethionine synthase (400 aa).

Residue 136-141 (GTGSTD) participates in ATP binding.

Belongs to the AdoMet synthase 2 family. The cofactor is Mg(2+).

It carries out the reaction L-methionine + ATP + H2O = S-adenosyl-L-methionine + phosphate + diphosphate. Its pathway is amino-acid biosynthesis; S-adenosyl-L-methionine biosynthesis; S-adenosyl-L-methionine from L-methionine: step 1/1. In terms of biological role, catalyzes the formation of S-adenosylmethionine from methionine and ATP. In Methanoregula boonei (strain DSM 21154 / JCM 14090 / 6A8), this protein is S-adenosylmethionine synthase.